We begin with the raw amino-acid sequence, 107 residues long: Phosphoribosyl-ATP pyrophosphatase (107 aa).

It belongs to the PRA-PH family.

It localises to the cytoplasm. It carries out the reaction 1-(5-phospho-beta-D-ribosyl)-ATP + H2O = 1-(5-phospho-beta-D-ribosyl)-5'-AMP + diphosphate + H(+). The protein operates within amino-acid biosynthesis; L-histidine biosynthesis; L-histidine from 5-phospho-alpha-D-ribose 1-diphosphate: step 2/9. This Bacillus cereus (strain ATCC 14579 / DSM 31 / CCUG 7414 / JCM 2152 / NBRC 15305 / NCIMB 9373 / NCTC 2599 / NRRL B-3711) protein is Phosphoribosyl-ATP pyrophosphatase.